A 469-amino-acid chain; its full sequence is Putative diacyglycerol O-acyltransferase MT0231 (469 aa).

His-139 serves as the catalytic Proton acceptor.

The protein belongs to the long-chain O-acyltransferase family.

It carries out the reaction an acyl-CoA + a 1,2-diacyl-sn-glycerol = a triacyl-sn-glycerol + CoA. It functions in the pathway glycerolipid metabolism; triacylglycerol biosynthesis. This is Putative diacyglycerol O-acyltransferase MT0231 from Mycobacterium tuberculosis (strain CDC 1551 / Oshkosh).